A 105-amino-acid polypeptide reads, in one-letter code: Pyrimidine/purine nucleoside phosphorylase (105 aa).

It belongs to the nucleoside phosphorylase PpnP family.

It catalyses the reaction a purine D-ribonucleoside + phosphate = a purine nucleobase + alpha-D-ribose 1-phosphate. The enzyme catalyses adenosine + phosphate = alpha-D-ribose 1-phosphate + adenine. The catalysed reaction is cytidine + phosphate = cytosine + alpha-D-ribose 1-phosphate. It carries out the reaction guanosine + phosphate = alpha-D-ribose 1-phosphate + guanine. It catalyses the reaction inosine + phosphate = alpha-D-ribose 1-phosphate + hypoxanthine. The enzyme catalyses thymidine + phosphate = 2-deoxy-alpha-D-ribose 1-phosphate + thymine. The catalysed reaction is uridine + phosphate = alpha-D-ribose 1-phosphate + uracil. It carries out the reaction xanthosine + phosphate = alpha-D-ribose 1-phosphate + xanthine. Its function is as follows. Catalyzes the phosphorolysis of diverse nucleosides, yielding D-ribose 1-phosphate and the respective free bases. Can use uridine, adenosine, guanosine, cytidine, thymidine, inosine and xanthosine as substrates. Also catalyzes the reverse reactions. This is Pyrimidine/purine nucleoside phosphorylase from Ralstonia nicotianae (strain ATCC BAA-1114 / GMI1000) (Ralstonia solanacearum).